We begin with the raw amino-acid sequence, 949 residues long: Valine--tRNA ligase (949 aa).

Residues 45–55 (PNVTGVLHMGH) carry the 'HIGH' region motif. Positions 561–565 (KMSKS) match the 'KMSKS' region motif. Position 564 (Lys-564) interacts with ATP. The stretch at 882–949 (EELLKQEKTR…EIKEKLMTLP (68 aa)) forms a coiled coil.

It belongs to the class-I aminoacyl-tRNA synthetase family. ValS type 1 subfamily. In terms of assembly, monomer.

The protein localises to the cytoplasm. It carries out the reaction tRNA(Val) + L-valine + ATP = L-valyl-tRNA(Val) + AMP + diphosphate. Functionally, catalyzes the attachment of valine to tRNA(Val). As ValRS can inadvertently accommodate and process structurally similar amino acids such as threonine, to avoid such errors, it has a 'posttransfer' editing activity that hydrolyzes mischarged Thr-tRNA(Val) in a tRNA-dependent manner. The sequence is that of Valine--tRNA ligase from Protochlamydia amoebophila (strain UWE25).